Here is a 278-residue protein sequence, read N- to C-terminus: tRNA(Phe) (4-demethylwyosine(37)-C(7)) aminocarboxypropyltransferase (278 aa).

S-adenosyl-L-methionine contacts are provided by residues Ser-109, Arg-116, Glu-155, and 183-184; that span reads DN.

The protein belongs to the class I-like SAM-binding methyltransferase superfamily. TRM5/TYW2 family.

The protein localises to the cytoplasm. It catalyses the reaction 4-demethylwyosine(37) in tRNA(Phe) + S-adenosyl-L-methionine = 4-demethyl-7-[(3S)-3-amino-3-carboxypropyl]wyosine(37) in tRNA(Phe) + S-methyl-5'-thioadenosine + H(+). Functionally, S-adenosyl-L-methionine-dependent transferase that acts as a component of the wyosine derivatives biosynthesis pathway. Catalyzes the transfer of the alpha-amino-alpha-carboxypropyl (acp) group from S-adenosyl-L-methionine to 4-demethylwyosine (imG-14), forming 7-aminocarboxypropyl-demethylwyosine (wybutosine-86) at position 37 of tRNA(Phe). This is tRNA(Phe) (4-demethylwyosine(37)-C(7)) aminocarboxypropyltransferase from Pyrococcus horikoshii (strain ATCC 700860 / DSM 12428 / JCM 9974 / NBRC 100139 / OT-3).